The following is a 126-amino-acid chain: Urease subunit beta (126 aa).

The protein belongs to the urease beta subunit family. In terms of assembly, heterotrimer of UreA (gamma), UreB (beta) and UreC (alpha) subunits. Three heterotrimers associate to form the active enzyme.

It is found in the cytoplasm. It carries out the reaction urea + 2 H2O + H(+) = hydrogencarbonate + 2 NH4(+). It functions in the pathway nitrogen metabolism; urea degradation; CO(2) and NH(3) from urea (urease route): step 1/1. In Frankia casuarinae (strain DSM 45818 / CECT 9043 / HFP020203 / CcI3), this protein is Urease subunit beta.